The sequence spans 192 residues: Thiol-disulfide oxidoreductase ResA (192 aa).

The chain crosses the membrane as a helical; Signal-anchor for type II membrane protein span at residues 22–41; sequence SSILLILVAAVVFAIVSNMK. The 143-residue stretch at 47–189 folds into the Thioredoxin domain; that stretch reads YRVGDAAPDF…LEGYLNDIAP (143 aa). Cysteines 89 and 92 form a disulfide.

Belongs to the thioredoxin family. ResA subfamily.

It is found in the cell membrane. It functions in the pathway protein modification; cytochrome c assembly. Functionally, thiol-disulfide oxidoreductase which is required in disulfide reduction during c-type cytochrome synthesis. May accept reducing equivalents from CcdA, leading to breakage of disulfide bonds in apocytochrome c; following this reduction heme can be covalently attached. The protein is Thiol-disulfide oxidoreductase ResA of Oceanobacillus iheyensis (strain DSM 14371 / CIP 107618 / JCM 11309 / KCTC 3954 / HTE831).